The chain runs to 517 residues: GMP synthase [glutamine-hydrolyzing] (517 aa).

A Glutamine amidotransferase type-1 domain is found at 9 to 199 (RILILDFGSQ…VLGVCGCERL (191 aa)). Cys86 (nucleophile) is an active-site residue. Residues His173 and Glu175 contribute to the active site. The GMPS ATP-PPase domain occupies 200–392 (WTSESIIEDA…LGLPYNMLYR (193 aa)). 227–233 (SGGVDSS) provides a ligand contact to ATP.

In terms of assembly, homodimer.

It catalyses the reaction XMP + L-glutamine + ATP + H2O = GMP + L-glutamate + AMP + diphosphate + 2 H(+). The protein operates within purine metabolism; GMP biosynthesis; GMP from XMP (L-Gln route): step 1/1. Functionally, catalyzes the synthesis of GMP from XMP. The protein is GMP synthase [glutamine-hydrolyzing] of Vibrio campbellii (strain ATCC BAA-1116).